A 52-amino-acid chain; its full sequence is ATP synthase protein 8 (52 aa).

A helical membrane pass occupies residues 7–27 (MKWFLIYFIYLLIFYLFIMLI).

Belongs to the ATPase protein 8 family. F-type ATPases have 2 components, CF(1) - the catalytic core - and CF(0) - the membrane proton channel.

The protein localises to the mitochondrion membrane. Its function is as follows. Mitochondrial membrane ATP synthase (F(1)F(0) ATP synthase or Complex V) produces ATP from ADP in the presence of a proton gradient across the membrane which is generated by electron transport complexes of the respiratory chain. F-type ATPases consist of two structural domains, F(1) - containing the extramembraneous catalytic core and F(0) - containing the membrane proton channel, linked together by a central stalk and a peripheral stalk. During catalysis, ATP synthesis in the catalytic domain of F(1) is coupled via a rotary mechanism of the central stalk subunits to proton translocation. Part of the complex F(0) domain. Minor subunit located with subunit a in the membrane. The chain is ATP synthase protein 8 (mt:ATPase8) from Apis mellifera ligustica (Common honeybee).